The primary structure comprises 95 residues: Large ribosomal subunit protein bL25 (95 aa).

It belongs to the bacterial ribosomal protein bL25 family. As to quaternary structure, part of the 50S ribosomal subunit; part of the 5S rRNA/L5/L18/L25 subcomplex. Contacts the 5S rRNA. Binds to the 5S rRNA independently of L5 and L18.

This is one of the proteins that binds to the 5S RNA in the ribosome where it forms part of the central protuberance. This chain is Large ribosomal subunit protein bL25, found in Actinobacillus pleuropneumoniae serotype 3 (strain JL03).